A 433-amino-acid chain; its full sequence is E3 ubiquitin-protein ligase RNF26 (433 aa).

5 helical membrane-spanning segments follow: residues Leu24–Tyr44, Gly60–Leu80, Val147–Leu169, Val183–Trp203, and Leu220–Val240. Residues Cys380 to Arg422 form an RING-type zinc finger.

Interacts with INCA1. Interacts with TMEM43, ENDOD1, TMEM33 and TMED1 to form a complex capable of modulating innate immune signaling through the cGAS-STING pathway. Interacts with UBE2J1; this interaction is important for SQSTM1 ubiquitination. Ubiquitous. Up-regulated in several cancer cell lines.

It is found in the endoplasmic reticulum membrane. The enzyme catalyses S-ubiquitinyl-[E2 ubiquitin-conjugating enzyme]-L-cysteine + [acceptor protein]-L-lysine = [E2 ubiquitin-conjugating enzyme]-L-cysteine + N(6)-ubiquitinyl-[acceptor protein]-L-lysine.. The protein operates within protein modification; protein ubiquitination. E3 ubiquitin-protein ligase that plays a key role in endosome organization by retaining vesicles in the perinuclear cloud. Acts as a platform for perinuclear positioning of the endosomal system by mediating ubiquitination of SQSTM1 through interaction with the ubiquitin conjugating enzyme UBE2J1. Ubiquitinated SQSTM1 attracts specific vesicle-associated adapters, forming a molecular bridge that restrains cognate vesicles in the perinuclear region and organizes the endosomal pathway for efficient cargo transport. Also acts as a regulator of type I interferon production in response to viral infection by mediating the formation of 'Lys-11'-linked polyubiquitin chains on TMEM173/STING, leading to stabilize TMEM173/STING. Also required to limit type I interferon response by promoting autophagic degradation of IRF3. This chain is E3 ubiquitin-protein ligase RNF26, found in Homo sapiens (Human).